Consider the following 612-residue polypeptide: Glutamine--fructose-6-phosphate aminotransferase [isomerizing] (612 aa).

Residue cysteine 2 is the Nucleophile; for GATase activity of the active site. The region spanning 2–220 (CGIVGAIRAH…DGDIALLASD (219 aa)) is the Glutamine amidotransferase type-2 domain. SIS domains lie at 288-428 (AKSV…VRGL) and 461-602 (WAQQ…VDKP). The active-site For Fru-6P isomerization activity is lysine 607.

Homodimer.

It localises to the cytoplasm. It carries out the reaction D-fructose 6-phosphate + L-glutamine = D-glucosamine 6-phosphate + L-glutamate. Catalyzes the first step in hexosamine metabolism, converting fructose-6P into glucosamine-6P using glutamine as a nitrogen source. This is Glutamine--fructose-6-phosphate aminotransferase [isomerizing] from Neisseria meningitidis serogroup B (strain ATCC BAA-335 / MC58).